We begin with the raw amino-acid sequence, 82 residues long: MRFHWIPTLTVLLVLSMSFGTEAIPXXXXXXXXXXXXXXXXXXXXXXXSEVLECYFECGNWEGTCCDTGICVGIHNCKIPEN.

The signal sequence occupies residues 1-23 (MRFHWIPTLTVLLVLSMSFGTEA). A propeptide spanning residues 24-48 (IPXXXXXXXXXXXXXXXXXXXXXXX) is cleaved from the precursor. Intrachain disulfides connect Cys54–Cys66, Cys58–Cys71, and Cys65–Cys77.

Expressed by the venom duct.

The protein localises to the secreted. Its function is as follows. Acts as a neurotoxin by inhibiting an ion channel. This Iotyrris olangoensis (Sea snail) protein is Turripeptide Lol6.1.